Here is a 93-residue protein sequence, read N- to C-terminus: uncharacterized protein (93 aa).

Residues 1-22 (MSIPNLSSVTQLLSIATGLVST) form the signal peptide. Residue asparagine 5 is glycosylated (N-linked (GlcNAc...) asparagine; by host).

This is an uncharacterized protein from Invertebrate iridescent virus 6 (IIV-6).